A 69-amino-acid polypeptide reads, in one-letter code: Nodulin-3 (69 aa).

Residues 1-24 (MAKILKFVFAIILFFSLFLLSMEA) form the signal peptide.

The protein is Nodulin-3 (ENOD3) of Pisum sativum (Garden pea).